A 666-amino-acid chain; its full sequence is Nuclear distribution protein nudE homolog 1 (666 aa).

Residues 14 to 195 (EEEIAHYREK…KDQLARAIAT (182 aa)) are a coiled coil. 4 disordered regions span residues 40-64 (EFQQ…KQQA), 220-310 (DDIN…SGIP), 369-388 (KRVT…PAPH), and 397-666 (DHNT…KVKK). The segment covering 251-274 (RSGTMSSIPVASPSTKRFSQQIPH) has biased composition (polar residues). Low complexity-rich tracts occupy residues 275-287 (SPSF…STTS) and 372-383 (TSTTSTTSSTTT). The segment covering 400 to 410 (TTPTAQSQQFP) has biased composition (polar residues). 3 stretches are compositionally biased toward low complexity: residues 449 to 465 (PTFR…LPSR), 473 to 485 (ASGS…SGTA), and 536 to 554 (SATP…STSN). Polar residues-rich tracts occupy residues 587 to 599 (RQSL…TPTT) and 614 to 638 (SSLS…SGRP).

This sequence belongs to the nudE family. In terms of assembly, self-associates. Interacts with PAC1.

It localises to the cytoplasm. Its subcellular location is the cytoskeleton. Its function is as follows. Required for nuclear migration. This chain is Nuclear distribution protein nudE homolog 1 (NDE1), found in Cryptococcus neoformans var. neoformans serotype D (strain B-3501A) (Filobasidiella neoformans).